Consider the following 414-residue polypeptide: Histidine--tRNA ligase (414 aa).

The protein belongs to the class-II aminoacyl-tRNA synthetase family. As to quaternary structure, homodimer.

It is found in the cytoplasm. The catalysed reaction is tRNA(His) + L-histidine + ATP = L-histidyl-tRNA(His) + AMP + diphosphate + H(+). In Rickettsia rickettsii (strain Iowa), this protein is Histidine--tRNA ligase.